A 127-amino-acid polypeptide reads, in one-letter code: Fluoride-specific ion channel FluC (127 aa).

4 helical membrane passes run 4 to 24, 39 to 59, 68 to 88, and 102 to 122; these read LDYL…YLVS, GTII…FAAI, AILF…TFTY, and VAYA…GMIL. 2 residues coordinate Na(+): Gly-78 and Thr-81.

This sequence belongs to the fluoride channel Fluc/FEX (TC 1.A.43) family.

The protein resides in the cell inner membrane. It carries out the reaction fluoride(in) = fluoride(out). Na(+) is not transported, but it plays an essential structural role and its presence is essential for fluoride channel function. Functionally, fluoride-specific ion channel. Important for reducing fluoride concentration in the cell, thus reducing its toxicity. In Thermotoga maritima (strain ATCC 43589 / DSM 3109 / JCM 10099 / NBRC 100826 / MSB8), this protein is Fluoride-specific ion channel FluC.